The sequence spans 369 residues: Tsukushi (369 aa).

A signal peptide spans 1-19 (MQFLAWFNMLLLLPCFSTT). An LRRNT domain is found at 20 to 60 (KTCFPGCHCEVESFGLFDSFSLTKVDCSGIGSHIVPVPIPL). LRR repeat units follow at residues 61–81 (DTSYLDLSSNKLETINESMLT), 87–108 (TLVSLDLSYNNIAKISSTTFSR), 111–132 (YLESLDLSHNSLEVLPEDCFSS), 134–155 (PLGDIDLSNNKLLDIALDVFAS), 161–181 (PLNVDLSNNMLSKITRNHEKS), 184–205 (NIQNLNLSGNRLTSVPNLQGIP), 206–226 (LRYLNLDGNPLAKIEKGDFKG), 229–248 (GLIHLSLSGLHDFRELSPYS), 254–276 (ALQVLDLSNNPNLRSLTAEVIFG), 279–300 (SIQELNLSGTGVSSLPKTVLKY), and 303–323 (SLKSITLRKNIQCFKTIKEGQ). The N-linked (GlcNAc...) asparagine glycan is linked to Asn-76. Residue Asn-189 is glycosylated (N-linked (GlcNAc...) asparagine). Asn-284 carries an N-linked (GlcNAc...) asparagine glycan.

As to quaternary structure, forms a ternary complex with chordin/CHRD and BMP4. Interacts with FZD4 (via FZ domain); competes with WNT2B for binding to FZD4, inhibiting Wnt signaling and repressing peripheral eye development. Interacts with BMP4; shows stronger interaction with BMP4 than isoform 2. Interacts with DVR1/VG1; the interaction is inhibited by BMP4. Interacts with BMP7. In terms of assembly, interacts with FZD4 (via FZ domain); competes with WNT2B for binding to FZD4, inhibiting Wnt signaling and repressing peripheral eye development. Interacts with BMP4; shows weaker interaction with BMP4 than isoform 1. Interacts with DVR1/VG1; the interaction is inhibited by BMP4. Interacts with BMP7. N-glycosylated. In terms of tissue distribution, during embryonic development, expressed in the middle primitive streak and Hensen's node. Expressed in the peripheral region of the developing eye. Expressed in the presomitic mesoderm during somitogenesis in a NOTCH-dependent manner.

Its subcellular location is the secreted. Functionally, contributes to various developmental events through its interactions with multiple signaling pathways. Dorsalizing factor involved in the induction of Hensen's node by inhibiting bone morphogenetic proteins during gastrulation and by enhancing DVR1/VG1 activity. Wnt signaling inhibitor which competes with WNT2B for binding to Wnt receptor FZD4 and represses WNT2B-dependent development of the peripheral eye. Shows strong bone morphogenetic protein antagonistic activity. Its function is as follows. Shows weak bone morphogenetic protein antagonistic activity. The sequence is that of Tsukushi (TSKU) from Gallus gallus (Chicken).